Reading from the N-terminus, the 131-residue chain is MSGGKSGGKAAVAKSAQSRSAKAGLAFPVGRVHRLLRKGNYAQRVGAGAPVYLAAVLEYLAAEILELAGNAARDNKKTRIIPRHLQLAIRNDEELNKLLGHVTIAQGGVVPNINAHLLPKQSGKGKPSQEL.

S2 carries the post-translational modification N-acetylserine. Residues K5 and K9 each carry the N6-acetyllysine modification. Residue Q106 is modified to N5-methylglutamine. A Phosphoserine modification is found at S128. The short motif at 128 to 129 (SQ) is the [ST]-Q motif element.

Belongs to the histone H2A family. As to quaternary structure, the nucleosome is a histone octamer containing two molecules each of H2A, H2B, H3 and H4 assembled in one H3-H4 heterotetramer and two H2A-H2B heterodimers. The octamer wraps approximately 147 bp of DNA. Post-translationally, phosphorylated to form H2AS128ph (gamma-H2A) in response to DNA double-strand breaks (DSBs) generated by exogenous genotoxic agents and by stalled replication forks. Phosphorylation is dependent on the DNA damage checkpoint kinases rad3/ATR and tel1/ATM, spreads on either side of a detected DSB site and may mark the surrounding chromatin for recruitment of proteins required for DNA damage signaling and repair. Gamma-H2A is required for recruiting crb2, a modulator of DNA damage checkpoint signaling, to DSB sites. Gamma-H2A is removed from the DNA prior to the strand invasion-primer extension step of the repair process and subsequently dephosphorylated. Dephosphorylation is necessary for efficient recovery from the DNA damage checkpoint. In terms of processing, acetylated by esa1 to form H2AK4ac and H2AK7ac.

It is found in the nucleus. Its subcellular location is the chromosome. Its function is as follows. Core component of nucleosome which plays a central role in DNA double strand break (DSB) repair. Nucleosomes wrap and compact DNA into chromatin, limiting DNA accessibility to the cellular machineries which require DNA as a template. Histones thereby play a central role in transcription regulation, DNA repair, DNA replication and chromosomal stability. DNA accessibility is regulated via a complex set of post-translational modifications of histones, also called histone code, and nucleosome remodeling. The sequence is that of Histone H2A-beta (hta2) from Schizosaccharomyces pombe (strain 972 / ATCC 24843) (Fission yeast).